The following is a 313-amino-acid chain: Cytochrome f (313 aa).

The first 31 residues, 1-31, serve as a signal peptide directing secretion; sequence MQNMFSFLSNKKIIALFLIIGTIFMPLSSEA. The heme site is built by tyrosine 32, cysteine 52, cysteine 55, and histidine 56. The helical transmembrane segment at 279 to 298 threads the bilayer; it reads IKWLIAFLILSTLGQVFLVL.

The protein belongs to the cytochrome f family. The 4 large subunits of the cytochrome b6-f complex are cytochrome b6, subunit IV (17 kDa polypeptide, petD), cytochrome f and the Rieske protein, while the 4 small subunits are PetG, PetL, PetM and PetN. The complex functions as a dimer. Heme serves as cofactor.

The protein localises to the plastid. It is found in the chloroplast thylakoid membrane. Component of the cytochrome b6-f complex, which mediates electron transfer between photosystem II (PSII) and photosystem I (PSI), cyclic electron flow around PSI, and state transitions. This chain is Cytochrome f (petA), found in Mesostigma viride (Green alga).